Consider the following 415-residue polypeptide: von Willebrand factor A domain-containing protein 1 (415 aa).

Positions 1 to 18 (MLFWTAFSMALSLRLALA) are cleaved as a signal peptide. One can recognise a VWFA domain in the interval 34–209 (DLLFLLDSSA…IIARELRGSI (176 aa)). Phosphoserine occurs at positions 74, 80, and 93. 2 Fibronectin type-III domains span residues 214-305 (QPQQ…LQEE) and 307-403 (GPER…TRAP). Residue N264 is glycosylated (N-linked (GlcNAc...) asparagine). The cysteines at positions 369 and 393 are disulfide-linked. A disordered region spans residues 391-415 (KACTASGARTRAPQSMRPEAGPREP).

Homodimer or homomultimer; disulfide-linked. Interacts with HSPG2. N-glycosylated. Expressed at high levels in the chondrocytes. Detected in the vasculature of neural tissues, in basement membrane structures of the peripheral nervous system, in the apical ectodermal ridge of developing limb buds, and in skeletal and cardiac muscle (at protein level).

It is found in the secreted. Its subcellular location is the extracellular space. The protein resides in the extracellular matrix. The protein localises to the basement membrane. Its function is as follows. Promotes matrix assembly. Involved in the organization of skeletal muscles and in the formation of neuromuscular junctions. This chain is von Willebrand factor A domain-containing protein 1 (Vwa1), found in Mus musculus (Mouse).